Here is a 227-residue protein sequence, read N- to C-terminus: Probable methylthioribulose-1-phosphate dehydratase (227 aa).

A substrate-binding site is contributed by Cys87. Zn(2+) is bound by residues His105 and His107. The active-site Proton donor/acceptor is the Glu129. Zn(2+) is bound at residue His185.

It belongs to the aldolase class II family. MtnB subfamily. The cofactor is Zn(2+).

The protein resides in the cytoplasm. The catalysed reaction is 5-(methylsulfanyl)-D-ribulose 1-phosphate = 5-methylsulfanyl-2,3-dioxopentyl phosphate + H2O. Its pathway is amino-acid biosynthesis; L-methionine biosynthesis via salvage pathway; L-methionine from S-methyl-5-thio-alpha-D-ribose 1-phosphate: step 2/6. Its function is as follows. Catalyzes the dehydration of methylthioribulose-1-phosphate (MTRu-1-P) into 2,3-diketo-5-methylthiopentyl-1-phosphate (DK-MTP-1-P). This is Probable methylthioribulose-1-phosphate dehydratase from Drosophila ananassae (Fruit fly).